The following is a 2300-amino-acid chain: Adenylate cyclase (2300 aa).

Composition is skewed to polar residues over residues 1-21 and 28-41; these read MTRNDGGSRYSSIDSAQSSIT and TPTSSLGSSMTRPL. Disordered stretches follow at residues 1–256, 272–593, and 631–652; these read MTRN…GSFL, GIRP…DLTR, and TKLFTSKKSSSAKQPQDDMDED. Low complexity-rich tracts occupy residues 42–61 and 92–152; these read SPSLQAGSSSSNGGHNVSRS and SSQS…QVSP. Residues 153 to 169 are compositionally biased toward polar residues; it reads TGGSRLTQSPTTPSNAS. Over residues 170–185 the composition is skewed to basic and acidic residues; the sequence is IREHRMSELGGYRREM. Over residues 204–221 the composition is skewed to low complexity; that stretch reads QQQPQQPQQQQQQQQQQQ. Over residues 228–237 the composition is skewed to polar residues; that stretch reads VSGTFSNLSQ. The span at 303-313 shows a compositional bias: low complexity; sequence SIASITTTASS. The segment covering 333–344 has biased composition (basic and acidic residues); it reads GDRDDWPGRDSS. The segment covering 345–357 has biased composition (polar residues); that stretch reads EISLPQPSHSGPM. Over residues 410 to 421 the composition is skewed to pro residues; the sequence is PSRPRTPVPAPE. Over residues 455–469 the composition is skewed to polar residues; that stretch reads DSSQNPPKTSSSARS. Residues 484–501 show a composition bias toward basic and acidic residues; sequence KSNEDPRALKPSLSREDS. Positions 511–550 are enriched in polar residues; sequence NGSSSMMGTRSRAQSPAPSWTGTSRGLKANSISDGTSSPA. Residues 552 to 565 are compositionally biased toward basic residues; it reads SHKKGILGRFRRHN. Residues 631–643 show a composition bias toward low complexity; the sequence is TKLFTSKKSSSAK. One can recognise a Ras-associating domain in the interval 749-841; it reads SNYYIRVFRS…IDEIGREDNS (93 aa). 16 LRR repeats span residues 867–890, 892–914, 915–938, 939–961, 962–986, 988–1008, 1009–1031, 1033–1055, 1056–1079, 1081–1097, 1098–1119, 1120–1142, 1143–1165, 1166–1188, 1189–1211, and 1213–1234; these read NQKLNHVDLSGRNLITIPVPLYRK, AEIVSLNLSRNLSLDVPRDFIQA, CTALRDIKYNNNEAQALPKSFATA, SKLTYLDVSNNRLQDLDHSELSK, LTGLLKLNLANNCLRSLPPTLGAYK, LRTLNISSNFLDVFPSFICEL, ETIVDLDLSFNSINNLPDNLMKL, NLEKFVITNNRLSGPISESVRDL, VSLRELDIRYNQISTIDVLSDLPR, EILSADHNQISKFSGSF, ERLRSLKLNSNPIVKFEVKAPV, PTLKILNLSNAQLASIDESIDNL, MNLERLILDSNYFVSLPNQIGNL, KKLDHLSMANNHLGELPPEIGCL, TELRTLDVHGNNMRKLPNEIWWA, and KLEHLNASSNILTEFPKPASRA. Positions 1228–1336 are disordered; sequence PKPASRAPQA…VITPSNGPRK (109 aa). The segment covering 1253–1263 has biased composition (polar residues); sequence ANKNGLLSRTP. A compositionally biased stretch (low complexity) spans 1313–1327; it reads TSVVSRSTTQSSTGV. LRR repeat units lie at residues 1349–1369, 1373–1396, 1398–1420, 1422–1445, 1447–1469, and 1474–1497; these read SGSLKNLYLADNQLDDDVFEE, LPELRVLNLSCNDLSDMPQGTIRS, PQLVELYLSGNELTSLPAEDFLE, HCLLQTLHINGNKFINLPAEISRA, KLQVLDCSSNNLKYNVTNVPYDW, and NRDLRYLNLSGNKRLEIKNNYRQP. The region spanning 1552–1828 is the PPM-type phosphatase domain; sequence PYGMADTLGK…NKLLIMMIGV (277 aa). A disordered region spans residues 1847 to 1867; the sequence is FSMPQDDPSHVPPSGNKRRKV. A Guanylate cyclase domain is found at 1892–2029; sequence SIVFTDIKNS…PMVNKASRIS (138 aa). 2 residues coordinate Mg(2+): Asp1897 and Asp1940. A disordered region spans residues 2272 to 2300; that stretch reads LDQAETDDATDNNSSGDVDTLDGSDTEQE. Acidic residues predominate over residues 2290–2300; the sequence is DTLDGSDTEQE.

Belongs to the adenylyl cyclase class-4/guanylyl cyclase family. Requires Mg(2+) as cofactor.

It carries out the reaction ATP = 3',5'-cyclic AMP + diphosphate. Plays essential roles in regulation of cellular metabolism by catalyzing the synthesis of a second messenger, cAMP. The sequence is that of Adenylate cyclase (cr-1) from Neurospora crassa (strain ATCC 24698 / 74-OR23-1A / CBS 708.71 / DSM 1257 / FGSC 987).